A 344-amino-acid polypeptide reads, in one-letter code: MAAMLKATERHFYFHGREGYEVERNNCHWCQIRAFPTHSTLPVTVVNEQDDEVLPDDFRFINNVVLGKGVEQAGDSFRSGCSCAKDSECQYTSCHCLADLEDDDSSDEEEFDAFGDKIERTTPKPRRIAYAYHSHGAKAGLLRSKFHNSKMPIYECHQSCSCSIDCPNRVVERGRTIPLEIFRTPDRGWGVRSPVSIKKGQFVDRYLGEIITSNEADRRRSQSVISQRKDVYLFALDKFTDPDSFDHRLKGPSLEVDGEFMSGPTRFVNHSCDPNMRIFARVGDHADKHIHDLALFAIKDIPEGEELTFDYVDGVSHEGEESGGDIDHMTRCLCGSKKCRKFLW.

A Pre-SET domain is found at 79 to 174 (SGCSCAKDSE…DCPNRVVERG (96 aa)). Zn(2+)-binding residues include Cys-81, Cys-83, Cys-89, Cys-94, Cys-96, Cys-156, Cys-160, Cys-162, Cys-166, and Cys-272. The region spanning 177–312 (IPLEIFRTPD…EGEELTFDYV (136 aa)) is the SET domain. Tyr-311 provides a ligand contact to S-adenosyl-L-methionine. A Post-SET domain is found at 328–344 (HMTRCLCGSKKCRKFLW). 3 residues coordinate Zn(2+): Cys-332, Cys-334, and Cys-339.

The protein belongs to the class V-like SAM-binding methyltransferase superfamily.

Its subcellular location is the chromosome. The catalysed reaction is L-lysyl(9)-[histone H3] + 3 S-adenosyl-L-methionine = N(6),N(6),N(6)-trimethyl-L-lysyl(9)-[histone H3] + 3 S-adenosyl-L-homocysteine + 3 H(+). Its function is as follows. Histone methyltransferase that specifically trimethylates histone H3 to form H3K9me3. H3K9me3 marks chromatin regions for DNA methylation. Plays a key role in the regulation of the biosynthesis of the gamma-pyrones fusapyrone (FPY) and deoxyfusapyrone (dFPY). This is Histone-lysine N-methyltransferase, H3 lysine-9 specific KMT1 from Fusarium mangiferae (Mango malformation disease fungus).